Here is a 514-residue protein sequence, read N- to C-terminus: Protein nucleotidyltransferase YdiU (514 aa).

G111, G113, R114, K134, D146, G147, R197, and R204 together coordinate ATP. The Proton acceptor role is filled by D276. Residues N277 and D286 each coordinate Mg(2+). D286 contacts ATP.

The protein belongs to the SELO family. Mg(2+) is required as a cofactor. Mn(2+) serves as cofactor.

It carries out the reaction L-seryl-[protein] + ATP = 3-O-(5'-adenylyl)-L-seryl-[protein] + diphosphate. The catalysed reaction is L-threonyl-[protein] + ATP = 3-O-(5'-adenylyl)-L-threonyl-[protein] + diphosphate. The enzyme catalyses L-tyrosyl-[protein] + ATP = O-(5'-adenylyl)-L-tyrosyl-[protein] + diphosphate. It catalyses the reaction L-histidyl-[protein] + UTP = N(tele)-(5'-uridylyl)-L-histidyl-[protein] + diphosphate. It carries out the reaction L-seryl-[protein] + UTP = O-(5'-uridylyl)-L-seryl-[protein] + diphosphate. The catalysed reaction is L-tyrosyl-[protein] + UTP = O-(5'-uridylyl)-L-tyrosyl-[protein] + diphosphate. Functionally, nucleotidyltransferase involved in the post-translational modification of proteins. It can catalyze the addition of adenosine monophosphate (AMP) or uridine monophosphate (UMP) to a protein, resulting in modifications known as AMPylation and UMPylation. The chain is Protein nucleotidyltransferase YdiU from Rhodococcus jostii (strain RHA1).